Consider the following 182-residue polypeptide: Adenine phosphoribosyltransferase (182 aa).

Belongs to the purine/pyrimidine phosphoribosyltransferase family. As to quaternary structure, homodimer.

The protein localises to the cytoplasm. It carries out the reaction AMP + diphosphate = 5-phospho-alpha-D-ribose 1-diphosphate + adenine. The protein operates within purine metabolism; AMP biosynthesis via salvage pathway; AMP from adenine: step 1/1. Its function is as follows. Catalyzes a salvage reaction resulting in the formation of AMP, that is energically less costly than de novo synthesis. The chain is Adenine phosphoribosyltransferase from Sulfurimonas denitrificans (strain ATCC 33889 / DSM 1251) (Thiomicrospira denitrificans (strain ATCC 33889 / DSM 1251)).